We begin with the raw amino-acid sequence, 420 residues long: Putative polyketide beta-ketoacyl synthase 1 (420 aa).

Residues 3–414 (QRRVAITGIE…GFQSAMVLTS (412 aa)) enclose the Ketosynthase family 3 (KS3) domain. Catalysis depends on for beta-ketoacyl synthase activity residues Cys-169, His-307, and His-344.

The protein belongs to the thiolase-like superfamily. Beta-ketoacyl-ACP synthases family.

It participates in antifungal biosynthesis; monensin biosynthesis. This Streptomyces virginiae (Streptomyces cinnamonensis) protein is Putative polyketide beta-ketoacyl synthase 1.